We begin with the raw amino-acid sequence, 205 residues long: Glycerol-3-phosphate acyltransferase (205 aa).

The Periplasmic segment spans residues 1 to 3 (MSA). Residues 4-24 (IAPGMILFAYLCGSISSAILV) traverse the membrane as a helical segment. Residues 25–52 (CRIAGLPDPRESGSGNPGATNVLRIGGK) lie on the Cytoplasmic side of the membrane. Residues 53–73 (GAAVAVLIFDILKGMLPVWGA) form a helical membrane-spanning segment. The Periplasmic segment spans residues 74–80 (YALGITP). Residues 81–101 (FWLGLIAIAACLGHIWPVFFG) traverse the membrane as a helical segment. At 102–111 (FKGGKGVATA) the chain is on the cytoplasmic side. Residues 112–132 (FGAIAPIGWDLTGVIAGTWLL) traverse the membrane as a helical segment. Over 133 to 137 (TVLLS) the chain is Periplasmic. Residues 138–158 (GYSSLGAIVSALIAPFYVWWF) traverse the membrane as a helical segment. The Cytoplasmic segment spans residues 159 to 205 (KPQFTFPVSMLSCLILLRHHDNIQRLWRRQETKIWTKLKKKREKESK).

The protein belongs to the PlsY family. As to quaternary structure, probably interacts with PlsX.

The protein resides in the cell inner membrane. It carries out the reaction sn-glycerol 3-phosphate + an acyl-CoA = a 1-acyl-sn-glycero-3-phosphate + CoA. It catalyses the reaction a fatty acyl-[ACP] + sn-glycerol 3-phosphate = a 1-acyl-sn-glycero-3-phosphate + holo-[ACP]. Its pathway is lipid metabolism; phospholipid metabolism. Functionally, catalyzes the transfer of an acyl group from acyl-ACP to glycerol-3-phosphate (G3P) to form lysophosphatidic acid (LPA). This enzyme can also utilize acyl-CoA as fatty acyl donor, but not acyl-PO(4). This Salmonella arizonae (strain ATCC BAA-731 / CDC346-86 / RSK2980) protein is Glycerol-3-phosphate acyltransferase.